Here is a 761-residue protein sequence, read N- to C-terminus: Prolyl oligopeptidase A (761 aa).

Catalysis depends on charge relay system residues Ser606, Asp690, and His726.

This sequence belongs to the peptidase S9A family. As to quaternary structure, monomer.

The enzyme catalyses Hydrolysis of Pro-|-Xaa &gt;&gt; Ala-|-Xaa in oligopeptides.. In terms of biological role, housekeeping prolyl oligopeptidase (POP) that behaves like a conventional POP by cleaving peptide bonds on the C-terminal side of prolyl residues within peptides that are up to approximately 30 amino acids long. The chain is Prolyl oligopeptidase A from Amanita bisporigera (Destroying angel).